The chain runs to 347 residues: GMP reductase (347 aa).

108 to 131 contributes to the NADP(+) binding site; it reads ADFEKTKQILDLNPALNFVCIDVA. Residues Gly-181 and Gly-183 each coordinate K(+). Cys-186 functions as the Thioimidate intermediate in the catalytic mechanism. Residue 216-239 coordinates NADP(+); the sequence is IISDGGCTTPGDVAKAFGGGADFV.

It belongs to the IMPDH/GMPR family. GuaC type 1 subfamily. In terms of assembly, homotetramer.

The catalysed reaction is IMP + NH4(+) + NADP(+) = GMP + NADPH + 2 H(+). Functionally, catalyzes the irreversible NADPH-dependent deamination of GMP to IMP. It functions in the conversion of nucleobase, nucleoside and nucleotide derivatives of G to A nucleotides, and in maintaining the intracellular balance of A and G nucleotides. The sequence is that of GMP reductase from Escherichia coli O157:H7.